A 236-amino-acid polypeptide reads, in one-letter code: 2-C-methyl-D-erythritol 4-phosphate cytidylyltransferase (236 aa).

This sequence belongs to the IspD/TarI cytidylyltransferase family. IspD subfamily.

It catalyses the reaction 2-C-methyl-D-erythritol 4-phosphate + CTP + H(+) = 4-CDP-2-C-methyl-D-erythritol + diphosphate. It functions in the pathway isoprenoid biosynthesis; isopentenyl diphosphate biosynthesis via DXP pathway; isopentenyl diphosphate from 1-deoxy-D-xylulose 5-phosphate: step 2/6. In terms of biological role, catalyzes the formation of 4-diphosphocytidyl-2-C-methyl-D-erythritol from CTP and 2-C-methyl-D-erythritol 4-phosphate (MEP). The polypeptide is 2-C-methyl-D-erythritol 4-phosphate cytidylyltransferase (Pseudomonas savastanoi pv. phaseolicola (strain 1448A / Race 6) (Pseudomonas syringae pv. phaseolicola (strain 1448A / Race 6))).